Reading from the N-terminus, the 603-residue chain is Glutathione-regulated potassium-efflux system protein KefB (603 aa).

13 helical membrane-spanning segments follow: residues 4–24, 29–49, 55–75, 87–107, 115–135, 152–172, 177–197, 207–227, 230–250, 268–288, 291–311, 324–344, and 355–375; these read SDFL…VPLA, IGAV…GLGF, EILH…GLEL, IFGV…GLLM, AAVV…LQLM, VLLF…LLAG, HFDW…LIGG, FIAA…LVLG, LFMD…GVLL, GLLL…GVLY, LLWV…VLYL, MQFA…FSTA, and MALL…PLLM. The region spanning 402–521 is the RCK N-terminal domain; the sequence is KPQVIVVGFG…AGVTQFSRET (120 aa).

The protein belongs to the monovalent cation:proton antiporter 2 (CPA2) transporter (TC 2.A.37) family. KefB subfamily. Interacts with the regulatory subunit KefG.

Its subcellular location is the cell inner membrane. Functionally, pore-forming subunit of a potassium efflux system that confers protection against electrophiles. Catalyzes K(+)/H(+) antiport. This Shigella boydii serotype 4 (strain Sb227) protein is Glutathione-regulated potassium-efflux system protein KefB.